We begin with the raw amino-acid sequence, 92 residues long: Phosphoribosyl-ATP pyrophosphatase (92 aa).

The protein belongs to the PRA-PH family.

The protein localises to the cytoplasm. The catalysed reaction is 1-(5-phospho-beta-D-ribosyl)-ATP + H2O = 1-(5-phospho-beta-D-ribosyl)-5'-AMP + diphosphate + H(+). Its pathway is amino-acid biosynthesis; L-histidine biosynthesis; L-histidine from 5-phospho-alpha-D-ribose 1-diphosphate: step 2/9. This chain is Phosphoribosyl-ATP pyrophosphatase, found in Leptospira biflexa serovar Patoc (strain Patoc 1 / ATCC 23582 / Paris).